The primary structure comprises 85 residues: Putative membrane protein insertion efficiency factor (85 aa).

This sequence belongs to the UPF0161 family.

The protein localises to the cell membrane. Its function is as follows. Could be involved in insertion of integral membrane proteins into the membrane. The polypeptide is Putative membrane protein insertion efficiency factor (Buchnera aphidicola subsp. Schizaphis graminum (strain Sg)).